The following is a 617-amino-acid chain: Thioredoxin reductase (617 aa).

FAD contacts are provided by residues 127–128 (PG), 147–150 (DYVK), 163–164 (TC), 168–172 (GCVPK), alanine 237, aspartate 433, and 440–442 (ELA). The cysteines at positions 164 and 169 are disulfide-linked. Residues 514–528 (HRQKHIRAQKDEYDL) form a loop important for the interaction with TRX1 region. FAD is bound at residue histidine 585. Histidine 585 functions as the Proton acceptor in the catalytic mechanism. An intrachain disulfide couples cysteine 611 to cysteine 616.

It belongs to the class-I pyridine nucleotide-disulfide oxidoreductase family. As to quaternary structure, homodimer. FAD is required as a cofactor.

Its subcellular location is the mitochondrion. The protein localises to the cytoplasm. It catalyses the reaction [thioredoxin]-dithiol + NADP(+) = [thioredoxin]-disulfide + NADPH + H(+). Functionally, catalyzes the transfer of electrons from NADPH to thioredoxins TRX1, TRX2 and TRX3, which in turn act as reductants of disulfide containing proteins. Able to reduce nitroglutathione (GSNO), a compound involved in the transport of nitric oxide (NO); however, TRX1 is more efficient in reducing GSNO. Has no catalytic activity towards oxidized glutathione (GSSG). This is Thioredoxin reductase from Plasmodium falciparum (isolate 3D7).